Here is a 90-residue protein sequence, read N- to C-terminus: Small ribosomal subunit protein bS20 (90 aa).

This sequence belongs to the bacterial ribosomal protein bS20 family.

Functionally, binds directly to 16S ribosomal RNA. The chain is Small ribosomal subunit protein bS20 from Fusobacterium nucleatum subsp. nucleatum (strain ATCC 25586 / DSM 15643 / BCRC 10681 / CIP 101130 / JCM 8532 / KCTC 2640 / LMG 13131 / VPI 4355).